The chain runs to 355 residues: Tyrosine recombinase XerC (355 aa).

The Core-binding (CB) domain occupies 4 to 89 (TQFDGDIDSF…AVRGFFAWAY (86 aa)). The segment at 137–181 (KDDGGAAAAPGSGKAAGKTADKSADTVNRSEAPARADKRDNARVT) is disordered. Positions 141 to 154 (GAAAAPGSGKAAGK) are enriched in low complexity. One can recognise a Tyr recombinase domain in the interval 158 to 349 (KSADTVNRSE…SIEQLKNRYG (192 aa)). Over residues 168-178 (APARADKRDNA) the composition is skewed to basic and acidic residues. Catalysis depends on residues arginine 200, lysine 224, histidine 301, arginine 304, and histidine 327. Tyrosine 336 serves as the catalytic O-(3'-phospho-DNA)-tyrosine intermediate.

This sequence belongs to the 'phage' integrase family. XerC subfamily. As to quaternary structure, forms a cyclic heterotetrameric complex composed of two molecules of XerC and two molecules of XerD.

The protein resides in the cytoplasm. Functionally, site-specific tyrosine recombinase, which acts by catalyzing the cutting and rejoining of the recombining DNA molecules. The XerC-XerD complex is essential to convert dimers of the bacterial chromosome into monomers to permit their segregation at cell division. It also contributes to the segregational stability of plasmids. The protein is Tyrosine recombinase XerC of Bifidobacterium longum (strain DJO10A).